Reading from the N-terminus, the 449-residue chain is tRNA-2-methylthio-N(6)-dimethylallyladenosine synthase (449 aa).

The 122-residue stretch at 3–124 (KMLYIKTYGC…LPTMLEKLDS (122 aa)) folds into the MTTase N-terminal domain. Cysteine 12, cysteine 48, cysteine 87, cysteine 163, cysteine 167, and cysteine 170 together coordinate [4Fe-4S] cluster. In terms of domain architecture, Radical SAM core spans 149 to 380 (KSPTVSGLVS…QAQLMLQQLE (232 aa)). A TRAM domain is found at 383 to 447 (QKLIGKVVPV…ASSLFGEVCP (65 aa)).

The protein belongs to the methylthiotransferase family. MiaB subfamily. Monomer. [4Fe-4S] cluster is required as a cofactor.

Its subcellular location is the cytoplasm. The catalysed reaction is N(6)-dimethylallyladenosine(37) in tRNA + (sulfur carrier)-SH + AH2 + 2 S-adenosyl-L-methionine = 2-methylsulfanyl-N(6)-dimethylallyladenosine(37) in tRNA + (sulfur carrier)-H + 5'-deoxyadenosine + L-methionine + A + S-adenosyl-L-homocysteine + 2 H(+). Functionally, catalyzes the methylthiolation of N6-(dimethylallyl)adenosine (i(6)A), leading to the formation of 2-methylthio-N6-(dimethylallyl)adenosine (ms(2)i(6)A) at position 37 in tRNAs that read codons beginning with uridine. This Orientia tsutsugamushi (strain Boryong) (Rickettsia tsutsugamushi) protein is tRNA-2-methylthio-N(6)-dimethylallyladenosine synthase.